Consider the following 360-residue polypeptide: Phospho-N-acetylmuramoyl-pentapeptide-transferase (360 aa).

A run of 10 helical transmembrane segments spans residues 27–47 (IVSL…MIAW), 73–93 (TMGG…WANL), 94–114 (SNPY…VGFV), 132–152 (WKYF…YSIG), 168–188 (VMPQ…VGTS), 199–219 (GLAI…AWAT), 236–256 (ASEL…FLWF), 263–283 (VFMG…IAVL), 288–308 (FLLV…ILQV), and 338–358 (VIVR…ATLK).

The protein belongs to the glycosyltransferase 4 family. MraY subfamily. Mg(2+) serves as cofactor.

It localises to the cell inner membrane. The enzyme catalyses UDP-N-acetyl-alpha-D-muramoyl-L-alanyl-gamma-D-glutamyl-meso-2,6-diaminopimeloyl-D-alanyl-D-alanine + di-trans,octa-cis-undecaprenyl phosphate = di-trans,octa-cis-undecaprenyl diphospho-N-acetyl-alpha-D-muramoyl-L-alanyl-D-glutamyl-meso-2,6-diaminopimeloyl-D-alanyl-D-alanine + UMP. The protein operates within cell wall biogenesis; peptidoglycan biosynthesis. In terms of biological role, catalyzes the initial step of the lipid cycle reactions in the biosynthesis of the cell wall peptidoglycan: transfers peptidoglycan precursor phospho-MurNAc-pentapeptide from UDP-MurNAc-pentapeptide onto the lipid carrier undecaprenyl phosphate, yielding undecaprenyl-pyrophosphoryl-MurNAc-pentapeptide, known as lipid I. The chain is Phospho-N-acetylmuramoyl-pentapeptide-transferase from Pectobacterium atrosepticum (strain SCRI 1043 / ATCC BAA-672) (Erwinia carotovora subsp. atroseptica).